The following is a 361-amino-acid chain: Phospho-N-acetylmuramoyl-pentapeptide-transferase (361 aa).

Transmembrane regions (helical) follow at residues 25 to 45 (RGIL…PAVI), 73 to 93 (TMGG…WGDL), 98 to 118 (VWLV…DDWI), 139 to 159 (IFGL…AAIT), 168 to 188 (IALP…IVGF), 200 to 220 (GLAI…AYAS), 237 to 257 (AGEL…FLWF), 264 to 284 (VFMG…IAVI), 290 to 310 (VLVI…IQVV), and 339 to 359 (VIVR…ATLK).

It belongs to the glycosyltransferase 4 family. MraY subfamily. Mg(2+) is required as a cofactor.

It localises to the cell inner membrane. It carries out the reaction UDP-N-acetyl-alpha-D-muramoyl-L-alanyl-gamma-D-glutamyl-meso-2,6-diaminopimeloyl-D-alanyl-D-alanine + di-trans,octa-cis-undecaprenyl phosphate = di-trans,octa-cis-undecaprenyl diphospho-N-acetyl-alpha-D-muramoyl-L-alanyl-D-glutamyl-meso-2,6-diaminopimeloyl-D-alanyl-D-alanine + UMP. The protein operates within cell wall biogenesis; peptidoglycan biosynthesis. Functionally, catalyzes the initial step of the lipid cycle reactions in the biosynthesis of the cell wall peptidoglycan: transfers peptidoglycan precursor phospho-MurNAc-pentapeptide from UDP-MurNAc-pentapeptide onto the lipid carrier undecaprenyl phosphate, yielding undecaprenyl-pyrophosphoryl-MurNAc-pentapeptide, known as lipid I. The chain is Phospho-N-acetylmuramoyl-pentapeptide-transferase from Xanthomonas euvesicatoria pv. vesicatoria (strain 85-10) (Xanthomonas campestris pv. vesicatoria).